Consider the following 876-residue polypeptide: Monofunctional isopimaradiene synthase, chloroplastic (876 aa).

The N-terminal 64 residues, methionine 1–isoleucine 64, are a transit peptide targeting the chloroplast. Positions 628, 632, 772, 776, and 780 each coordinate Mg(2+). A DDXXD motif motif is present at residues aspartate 628–aspartate 632.

It belongs to the terpene synthase family. Tpsd subfamily. Mg(2+) is required as a cofactor.

It is found in the plastid. Its subcellular location is the chloroplast. The catalysed reaction is (+)-copalyl diphosphate = isopimara-7,15-diene + diphosphate. The protein operates within terpene metabolism; oleoresin biosynthesis. In terms of biological role, involved in defensive oleoresin formation in conifers in response to insect attack or other injury. Involved in diterpene (C20) olefins biosynthesis. Monofunctional enzyme lacking the DXDD motif in the class II active site relevant for the cyclization of geranylgeranyl diphosphate (GGPP). Requires (+)-copalyl diphosphate ((+)-CPP) as substrate, but no activity with GGPP or ent-CPP. Isopimaradiene is the major products of the enzyme followed by sandaracopimaradiene. The polypeptide is Monofunctional isopimaradiene synthase, chloroplastic (Pinus banksiana (Jack pine)).